The primary structure comprises 269 residues: Formamidopyrimidine-DNA glycosylase (269 aa).

Residue Pro-2 is the Schiff-base intermediate with DNA of the active site. Glu-3 functions as the Proton donor in the catalytic mechanism. Lys-57 serves as the catalytic Proton donor; for beta-elimination activity. 3 residues coordinate DNA: His-90, Arg-109, and Arg-150. The FPG-type zinc-finger motif lies at 235–269 (QVYGRAGEACLTCGTTIKRSKHGQRTTFYCPHCQR). The Proton donor; for delta-elimination activity role is filled by Arg-259.

Belongs to the FPG family. As to quaternary structure, monomer. Zn(2+) serves as cofactor.

The catalysed reaction is Hydrolysis of DNA containing ring-opened 7-methylguanine residues, releasing 2,6-diamino-4-hydroxy-5-(N-methyl)formamidopyrimidine.. The enzyme catalyses 2'-deoxyribonucleotide-(2'-deoxyribose 5'-phosphate)-2'-deoxyribonucleotide-DNA = a 3'-end 2'-deoxyribonucleotide-(2,3-dehydro-2,3-deoxyribose 5'-phosphate)-DNA + a 5'-end 5'-phospho-2'-deoxyribonucleoside-DNA + H(+). Functionally, involved in base excision repair of DNA damaged by oxidation or by mutagenic agents. Acts as a DNA glycosylase that recognizes and removes damaged bases. Has a preference for oxidized purines, such as 7,8-dihydro-8-oxoguanine (8-oxoG). Has AP (apurinic/apyrimidinic) lyase activity and introduces nicks in the DNA strand. Cleaves the DNA backbone by beta-delta elimination to generate a single-strand break at the site of the removed base with both 3'- and 5'-phosphates. This Edwardsiella ictaluri (strain 93-146) protein is Formamidopyrimidine-DNA glycosylase.